Consider the following 104-residue polypeptide: Flagellar hook-basal body complex protein FliE (104 aa).

This sequence belongs to the FliE family.

It is found in the bacterial flagellum basal body. The sequence is that of Flagellar hook-basal body complex protein FliE from Salmonella newport (strain SL254).